The following is a 441-amino-acid chain: Aminopeptidase C (441 aa).

Active-site residues include cysteine 70, histidine 361, and asparagine 382.

Belongs to the peptidase C1 family.

It catalyses the reaction Inactivates bleomycin B2 (a cytotoxic glycometallopeptide) by hydrolysis of a carboxyamide bond of beta-aminoalanine, but also shows general aminopeptidase activity. The specificity varies somewhat with source, but amino acid arylamides of Met, Leu and Ala are preferred.. The sequence is that of Aminopeptidase C (pepC) from Listeria monocytogenes serovar 1/2a (strain ATCC BAA-679 / EGD-e).